The sequence spans 558 residues: Glucose-6-phosphate isomerase (558 aa).

The Proton donor role is filled by E362. Residues H393 and K523 contribute to the active site.

This sequence belongs to the GPI family.

Its subcellular location is the cytoplasm. The catalysed reaction is alpha-D-glucose 6-phosphate = beta-D-fructose 6-phosphate. It participates in carbohydrate degradation; glycolysis; D-glyceraldehyde 3-phosphate and glycerone phosphate from D-glucose: step 2/4. The chain is Glucose-6-phosphate isomerase (Pgi) from Drosophila melanogaster (Fruit fly).